We begin with the raw amino-acid sequence, 185 residues long: METSLRLRGGGSRPQSKSQEGLRIHAKEKLPIASNALLQAHGEIHAATGAPTYLALLFRNFYPRLSANLGLGLAIHFRNNQPLPLAWDNFSYTLRASKAIIPFPSNALLGINLKGRLLADKYFNPTTRTAAVELAWTILDLKRGQDVRLKLGYQLLHKMPYFQLRENNWTFNAYMDGKWDVRFDL.

Residues 1–22 (METSLRLRGGGSRPQSKSQEGL) form a disordered region. Topologically, residues 1 to 29 (METSLRLRGGGSRPQSKSQEGLRIHAKEK) are cytoplasmic. Residues 30–39 (LPIASNALLQ) traverse the membrane as a beta stranded segment. The Chloroplast intermembrane segment spans residues 40–63 (AHGEIHAATGAPTYLALLFRNFYP). A beta stranded membrane pass occupies residues 64-73 (RLSANLGLGL). The Cytoplasmic portion of the chain corresponds to 74-88 (AIHFRNNQPLPLAWD). Residues 89–98 (NFSYTLRASK) form a beta stranded membrane-spanning segment. Over 99–105 (AIIPFPS) the chain is Chloroplast intermembrane. Residues 106–115 (NALLGINLKG) traverse the membrane as a beta stranded segment. The Cytoplasmic segment spans residues 116–128 (RLLADKYFNPTTR). Residues 129–138 (TAAVELAWTI) traverse the membrane as a beta stranded segment. Residues 139 to 145 (LDLKRGQ) lie on the Chloroplast intermembrane side of the membrane. The chain crosses the membrane as a beta stranded span at residues 146 to 155 (DVRLKLGYQL). At 156-160 (LHKMP) the chain is on the cytoplasmic side. Residues 161–170 (YFQLRENNWT) traverse the membrane as a beta stranded segment. Residues 171–176 (FNAYMD) lie on the Chloroplast intermembrane side of the membrane. A beta stranded membrane pass occupies residues 177–185 (GKWDVRFDL).

Belongs to the plastid outer envelope porin OEP21 (TC 1.B.29) family.

The protein resides in the plastid. Its subcellular location is the etioplast membrane. It localises to the chloroplast outer membrane. Its function is as follows. Voltage-dependent rectifying anion channel that facilitates the translocation between chloroplast and cytoplasm of phosphorylated carbohydrates such as triosephosphate, 3-phosphoglycerate and inorganic phosphate (Pi) depending of ATP to triosephosphate ratio in the plastidial intermembrane space; in high triosephosphate/ATP conditions (e.g. photosynthesis), export of triosphosphate from chloroplast (outward rectifying channels), but in high ATP/triosephosphate conditions (e.g. dark phase), import of phosphosolutes (inward rectifying channels). This chain is Outer envelope pore protein 21, chloroplastic (OEP21), found in Oryza sativa subsp. indica (Rice).